Consider the following 401-residue polypeptide: MQLKALEVREITDYIKKMMDNDIILRNVRVKGEISNLKYHSTGIYFTLKDEIASLKCVMFNEYGKLLNFTLQDGMSVIVTGRISVYERNGTYQLYAQSIQSDGIGALYFAFNKLKEKLQKEGLFDSDKKKPIPKHPKKIAVVTSPTGAVIRDIITISRRRNPTVDILVVPVLVQGSSAADEICNAFRILNKREDIDVIILARGGGSLEEIWPFNEEKVARCIYASRIPVVSAVGHETDFTISDFVADLRAPTPSAAAEIVVPDIKVYQRELFLLKTKLLTLMTAELNRKKKEFEGLKRALYLNSPTKKSEILRHKVENLTASLYNEMLSIYQHKRNDFLILAEKLNSLSPLKVLTRGYTIVLDKQEKVISSVRDIKPYDEIKILFKDGKAKAIVQEVKENE.

This sequence belongs to the XseA family. In terms of assembly, heterooligomer composed of large and small subunits.

The protein resides in the cytoplasm. The catalysed reaction is Exonucleolytic cleavage in either 5'- to 3'- or 3'- to 5'-direction to yield nucleoside 5'-phosphates.. Functionally, bidirectionally degrades single-stranded DNA into large acid-insoluble oligonucleotides, which are then degraded further into small acid-soluble oligonucleotides. In Thermoanaerobacter sp. (strain X514), this protein is Exodeoxyribonuclease 7 large subunit.